A 104-amino-acid polypeptide reads, in one-letter code: ATP-dependent Clp protease adapter protein ClpS (104 aa).

Belongs to the ClpS family. In terms of assembly, binds to the N-terminal domain of the chaperone ClpA.

Involved in the modulation of the specificity of the ClpAP-mediated ATP-dependent protein degradation. This is ATP-dependent Clp protease adapter protein ClpS from Desulforapulum autotrophicum (strain ATCC 43914 / DSM 3382 / VKM B-1955 / HRM2) (Desulfobacterium autotrophicum).